The sequence spans 983 residues: MASNPDRGEILLTELQGDSRTLPFSENVSAVQKLDFSDTMVQQKLDDIKDRIKREIRKELKIKEGAENLRKVTTDKKNLAYVDNILKKSNKKLEELHHKLQELNAHIVVSDPEDSTDCPRTPDTPNSDSRSSTSNNRLMALQKQLDIELKVKQGAENMIQMYSNGSSKDRKLHGTAQQLLQDSKTKIEVIRMQILQAVQTNELAFDNAKPVISPLELRMEELRHHFKIEFAVAEGAKNVMKLLGSGKVTDRKALSEAQARFNESSQKLDLLKYSLEQRLNELPRNHPKSSVVIEELSLVASPTLSPRQSMLSTQNQYSTLSKPAALTGTLEVRLMGCQDILENVPGRSKATSVALPGWSPSDNRSSFMSRTSKSKSGSSRNLLKTDDLSNDVCAVLKLDNTVVGQTSWKPISNQSWDQKFTLELDRSRELEISVYWRDWRSLCAVKFLRLEDFLDNQRHGMCLYLEPQGTLFAEVTFFNPVIERRPKLQRQKKIFSKQQGKTFLRAPQMNINIATWGRLVRRAIPTVNHSGTFSPQTPVPATVPVVDARIPDLAPPASDSTVTKLDFDLEPEPPPAPPRASSLGETDESSELRVLDIPGQGSETVFNIENDRNNLRPKSKSEYELSIPDSGRSCWGVGELDDKRAQQRFQFSLQDFRCCAVLGRGHFGKVLLAEYKHTNEMFAIKALKKGDIVARDEVDSLMCEKRIFETVNSVRHPFLVNLFACFQTKEHVCFVMEYAAGGDLMMHIHTDVFSEPRAVFYAACVVLGLQYLHEHKIVYRDLKLDNLLLDTEGFVKIADFGLCKEGMGYGDRTSTFCGTPEFLAPEVLTETSYTRAVDWWGLGVLIYEMLVGESPFPGDDEEEVFDSIVNDEVRYPRFLSTEAISIMRRLLRRNPERRLGAGEKDAEDVKKHPFFRLTDWSALMDKKVKPPFVPTIRGREDVSNFDDEFTSEAPILTPPREPRILLEEEQEMFHDFDYVADWC.

One can recognise an REM-1 1 domain in the interval 33-109; the sequence is KLDFSDTMVQ…LQELNAHIVV (77 aa). Residue K77 is modified to N6-acetyllysine. Positions 107–135 are disordered; sequence IVVSDPEDSTDCPRTPDTPNSDSRSSTSN. Position 110 is a phosphoserine (S110). T121 and T124 each carry phosphothreonine. Residues 121–135 are compositionally biased toward low complexity; that stretch reads TPDTPNSDSRSSTSN. 2 REM-1 domains span residues 121 to 203 and 204 to 284; these read TPDT…TNEL and AFDN…ELPR. 4 positions are modified to phosphoserine: S301, S305, S359, and S361. The disordered stretch occupies residues 351-382; it reads TSVALPGWSPSDNRSSFMSRTSKSKSGSSRNL. The 121-residue stretch at 352-472 folds into the C2 domain; sequence SVALPGWSPS…LYLEPQGTLF (121 aa). A compositionally biased stretch (low complexity) spans 364-380; sequence RSSFMSRTSKSKSGSSR. Residues 381–462 are necessary to rescue apical junction formation; that stretch reads NLLKTDDLSN…FLDNQRHGMC (82 aa). Residues S534, S582, S619, and S630 each carry the phosphoserine modification. A disordered region spans residues 553–588; it reads LAPPASDSTVTKLDFDLEPEPPPAPPRASSLGETDE. The Protein kinase domain occupies 656–915; that stretch reads FRCCAVLGRG…AEDVKKHPFF (260 aa). ATP is bound by residues 662–670 and K685; that span reads LGRGHFGKV. The active-site Proton acceptor is the D781. T815 bears the Phosphothreonine; by PDPK1 mark. A necessary for the catalytic activity region spans residues 916–976; it reads RLTDWSALMD…EEEQEMFHDF (61 aa). The region spanning 916 to 983 is the AGC-kinase C-terminal domain; it reads RLTDWSALMD…HDFDYVADWC (68 aa). Phosphoserine is present on S951. At T957 the chain carries Phosphothreonine. Residues 977-983 form a negatively regulates the responsiveness of the catalytic activity by cardiolipin and is required for optimal activation by the GTP-bound RhoA region; that stretch reads DYVADWC.

It belongs to the protein kinase superfamily. AGC Ser/Thr protein kinase family. PKC subfamily. Interacts (via the REM repeats) with RHOA (GTP-bound form preferentially) and interacts (via the REM repeats) with RAC1 (GTP-bound form preferentially); the interactions induce its autophosphorylation. Interacts with NCK1 (via SH3 domains). Interacts with RHOC. Interacts with NCK1 and NCK2. Interacts with CD44. Interacts (via C-terminal kinase domain) with PDPK1; the interaction stimulates PDPK1 kinase activity. Interacts with MAP3K2; the interaction activates PRK2 kinase activity in a MAP3K2-independent kinase activity. Interacts (via C-terminal domain) with AKT1; the interaction occurs with the C-terminal cleavage product of PRK2 in apoptotic cells. Interacts (via C-terminus) with PTPN13 (via PDZ 3 domain). Interacts with CDK10. Phosphorylated during mitosis. Autophosphorylated. Phosphorylated. Phosphorylated by CDK10. Post-translationally, activated by limited proteolysis with trypsin. Proteolytically cleaved by caspase-3 during the induction of apoptotic cell death. As to expression, ubiquitous. Highly expressed in liver and lung Expressed in astrocytes (at protein level). Ubiquitous.

It is found in the cytoplasm. Its subcellular location is the nucleus. It localises to the membrane. The protein resides in the cell projection. The protein localises to the lamellipodium. It is found in the cytoskeleton. Its subcellular location is the cleavage furrow. It localises to the midbody. The protein resides in the cell junction. It carries out the reaction L-seryl-[protein] + ATP = O-phospho-L-seryl-[protein] + ADP + H(+). The catalysed reaction is L-threonyl-[protein] + ATP = O-phospho-L-threonyl-[protein] + ADP + H(+). Kinase activity is activated upon binding to GTP-bound Rho1/Rac1 GTPases. Activated by caspase-3 (CASP3) cleavage during apoptosis. Activated by lipids, particularly cardiolipin and to a lesser extent by other acidic phospholipids and unsaturated fatty acids. Two specific sites, Thr-815 (activation loop of the kinase domain) and Thr-957 (turn motif), need to be phosphorylated for its full activation. Its function is as follows. PKC-related serine/threonine-protein kinase and Rho/Rac effector protein that participates in specific signal transduction responses in the cell. Plays a role in the regulation of cell cycle progression, actin cytoskeleton assembly, cell migration, cell adhesion, tumor cell invasion and transcription activation signaling processes. Phosphorylates CTTN in hyaluronan-induced astrocytes and hence decreases CTTN ability to associate with filamentous actin. Phosphorylates HDAC5, therefore lead to impair HDAC5 import. Direct RhoA target required for the regulation of the maturation of primordial junctions into apical junction formation in bronchial epithelial cells. Required for G2/M phases of the cell cycle progression and abscission during cytokinesis in a ECT2-dependent manner. Stimulates FYN kinase activity that is required for establishment of skin cell-cell adhesion during keratinocytes differentiation. Regulates epithelial bladder cells speed and direction of movement during cell migration and tumor cell invasion. Inhibits Akt pro-survival-induced kinase activity. Mediates Rho protein-induced transcriptional activation via the c-fos serum response factor (SRF). Involved in the negative regulation of ciliogenesis. The chain is Serine/threonine-protein kinase N2 (Pkn2) from Mus musculus (Mouse).